The following is a 457-amino-acid chain: Multidrug resistance protein MdtK (457 aa).

The next 12 membrane-spanning stretches (helical) occupy residues 11-31 (LLALAIPVILAQIAQTAMGFV), 53-73 (IWLPAILFGHGLLLALTPVIA), 93-113 (WLAGFVSVLIMLVLWNAGYII), 127-147 (AVGYLRALLWGAPGYLFFQVA), 160-180 (GMVMGFIGLLVNIPVNYIFIY), 189-209 (GGVGCGVATAAVYWVMFLAMV), 243-263 (LPIALALFFEVTLFAVVALLV), 276-296 (IALNFSSLMFVLPMSLAAAVT), 314-334 (AARTGLMVGVCMATLTAIFTV), 350-370 (VVTLAAHLMLLAAVYQISDSI), 387-407 (IFYITFTAYWVLGLPSGYILA), and 418-438 (PAGFWIGFIIGLTSAAIMMML).

Belongs to the multi antimicrobial extrusion (MATE) (TC 2.A.66.1) family. MdtK subfamily.

It is found in the cell inner membrane. Multidrug efflux pump that functions probably as a Na(+)/drug antiporter. The protein is Multidrug resistance protein MdtK of Escherichia coli O127:H6 (strain E2348/69 / EPEC).